We begin with the raw amino-acid sequence, 524 residues long: Ribonuclease Y (524 aa).

The helical transmembrane segment at 7–27 threads the bilayer; it reads LGGLLTGIVIAIIASIIASVI. In terms of domain architecture, KH spans 214–299; the sequence is TVSVVPLPND…EMVEKARKEV (86 aa). One can recognise an HD domain in the interval 340 to 433; the sequence is VLSHSIEVAR…VQAADSISAA (94 aa).

Belongs to the RNase Y family.

It is found in the cell membrane. Functionally, endoribonuclease that initiates mRNA decay. In Acetivibrio thermocellus (strain ATCC 27405 / DSM 1237 / JCM 9322 / NBRC 103400 / NCIMB 10682 / NRRL B-4536 / VPI 7372) (Clostridium thermocellum), this protein is Ribonuclease Y.